Reading from the N-terminus, the 256-residue chain is uncharacterized protein (256 aa).

9-33 (VTGGGQGIGAAIAQLFAENGMKVVI) contacts NADP(+). Ser-140 is a substrate binding site. Residue Tyr-153 is the Proton acceptor of the active site.

The protein belongs to the short-chain dehydrogenases/reductases (SDR) family.

This is an uncharacterized protein from Thermotoga maritima (strain ATCC 43589 / DSM 3109 / JCM 10099 / NBRC 100826 / MSB8).